A 143-amino-acid chain; its full sequence is uncharacterized protein (143 aa).

Transmembrane regions (helical) follow at residues 16-36 (LIFAQIFIGCLMYFMLIIFVW) and 48-68 (ICYIIIFAIIDFVVCFKFIYV). Asn71 carries an N-linked (GlcNAc...) asparagine; by host glycan.

It is found in the membrane. This is an uncharacterized protein from Acanthamoeba polyphaga (Amoeba).